Here is a 302-residue protein sequence, read N- to C-terminus: MTTNLIWILYRSDSDTAYKETLNCKKIIEGYGKKVLFSEISNETNNINQLFLKSEVLPEITIVLGGDGTVLRAARYLSPKNIPILSFNVGGNLGFLTHDRQILKQETFWERVSNNRFNIQKRMMLEATVFREKNNNENTIKKSFFALNDFYLRSCTDEIAPTCSLALEIDGEAVDRYKGDGLIFSTPTGSTAYSMAAGGPIIHPSLDAIIVSAICPMSLASRPIVVPPESQLVIKPIRGMKQKIKLWLDGSSGCLIEAEDTCLIKKSNHSTSIIILDENHSYYKTITQKLHWASSLNNPNKQ.

Asp67 acts as the Proton acceptor in catalysis. Residues Asp67 to Gly68, Arg72, Asn148 to Asp149, Lys178, and Asp180 contribute to the NAD(+) site.

It belongs to the NAD kinase family. A divalent metal cation is required as a cofactor.

Its subcellular location is the cytoplasm. The enzyme catalyses NAD(+) + ATP = ADP + NADP(+) + H(+). Involved in the regulation of the intracellular balance of NAD and NADP, and is a key enzyme in the biosynthesis of NADP. Catalyzes specifically the phosphorylation on 2'-hydroxyl of the adenosine moiety of NAD to yield NADP. This is NAD kinase 1 from Prochlorococcus marinus (strain NATL2A).